A 203-amino-acid chain; its full sequence is Holliday junction branch migration complex subunit RuvA (203 aa).

The interval 1-62 (MYEYFLGQVT…ENGMSLFGFF (62 aa)) is domain I. The tract at residues 63-141 (DADEKALFEK…DLNVDVTGQT (79 aa)) is domain II. Residues 142 to 148 (ALDVDAP) are flexible linker. The tract at residues 149–203 (AVDGALADALAALEALGYSKADVKKVTKKLETFSQTQGADTNTLLSEGLRLLMKK) is domain III.

The protein belongs to the RuvA family. As to quaternary structure, homotetramer. Forms an RuvA(8)-RuvB(12)-Holliday junction (HJ) complex. HJ DNA is sandwiched between 2 RuvA tetramers; dsDNA enters through RuvA and exits via RuvB. An RuvB hexamer assembles on each DNA strand where it exits the tetramer. Each RuvB hexamer is contacted by two RuvA subunits (via domain III) on 2 adjacent RuvB subunits; this complex drives branch migration. In the full resolvosome a probable DNA-RuvA(4)-RuvB(12)-RuvC(2) complex forms which resolves the HJ.

The protein localises to the cytoplasm. In terms of biological role, the RuvA-RuvB-RuvC complex processes Holliday junction (HJ) DNA during genetic recombination and DNA repair, while the RuvA-RuvB complex plays an important role in the rescue of blocked DNA replication forks via replication fork reversal (RFR). RuvA specifically binds to HJ cruciform DNA, conferring on it an open structure. The RuvB hexamer acts as an ATP-dependent pump, pulling dsDNA into and through the RuvAB complex. HJ branch migration allows RuvC to scan DNA until it finds its consensus sequence, where it cleaves and resolves the cruciform DNA. The protein is Holliday junction branch migration complex subunit RuvA of Lactiplantibacillus plantarum (strain ATCC BAA-793 / NCIMB 8826 / WCFS1) (Lactobacillus plantarum).